Reading from the N-terminus, the 542-residue chain is Probable folate-biopterin transporter 8, chloroplastic (542 aa).

Residues M1 to R78 constitute a chloroplast transit peptide. The interval L24–M45 is disordered. 12 helical membrane-spanning segments follow: residues F103–L123, L132–G152, V155–F175, V181–V201, A223–L243, P246–L266, L308–Y328, S338–Y358, P369–V389, V404–V424, L446–I466, and G477–M497. The tract at residues G506–R542 is disordered. Positions G509–G521 are enriched in basic residues. Residues R522–R542 show a composition bias toward basic and acidic residues.

It belongs to the major facilitator superfamily. Folate-biopterin transporter (TC 2.A.71) family.

The protein resides in the plastid. It is found in the chloroplast membrane. Could mediate folate transport. The protein is Probable folate-biopterin transporter 8, chloroplastic of Arabidopsis thaliana (Mouse-ear cress).